The primary structure comprises 147 residues: Truncated RecQ DNA helicase-like protein C212.06c (147 aa).

The Helicase C-terminal domain maps to 1–72 (MGVRLVVHYR…CVRSFLASEM (72 aa)). The segment at 100–147 (ETPKPAIATHSRYNASFSSSPPPQPGSSSGMSAMNTNTTSTTPVSGKT) is disordered. Over residues 125–141 (GSSSGMSAMNTNTTSTT) the composition is skewed to low complexity.

The protein belongs to the helicase family. RecQ subfamily.

Truncated ATP-dependent 3'-5' DNA helicase. This chain is Truncated RecQ DNA helicase-like protein C212.06c, found in Schizosaccharomyces pombe (strain 972 / ATCC 24843) (Fission yeast).